Reading from the N-terminus, the 98-residue chain is Integration host factor subunit alpha (98 aa).

The tract at residues 51-71 is disordered; the sequence is NFDLRDKNERPGRNPKTGEDI. A compositionally biased stretch (basic and acidic residues) spans 53–69; the sequence is DLRDKNERPGRNPKTGE.

It belongs to the bacterial histone-like protein family. As to quaternary structure, heterodimer of an alpha and a beta chain.

This protein is one of the two subunits of integration host factor, a specific DNA-binding protein that functions in genetic recombination as well as in transcriptional and translational control. The sequence is that of Integration host factor subunit alpha from Vibrio cholerae serotype O1 (strain ATCC 39541 / Classical Ogawa 395 / O395).